We begin with the raw amino-acid sequence, 203 residues long: Outer-membrane lipoprotein carrier protein (203 aa).

The signal sequence occupies residues 1–21; the sequence is MKKWLAISCLIAGVTSTAVYA.

This sequence belongs to the LolA family. As to quaternary structure, monomer.

The protein localises to the periplasm. Participates in the translocation of lipoproteins from the inner membrane to the outer membrane. Only forms a complex with a lipoprotein if the residue after the N-terminal Cys is not an aspartate (The Asp acts as a targeting signal to indicate that the lipoprotein should stay in the inner membrane). This chain is Outer-membrane lipoprotein carrier protein, found in Pectobacterium atrosepticum (strain SCRI 1043 / ATCC BAA-672) (Erwinia carotovora subsp. atroseptica).